A 240-amino-acid chain; its full sequence is Orotidine 5'-phosphate decarboxylase (240 aa).

Substrate contacts are provided by residues aspartate 15, lysine 37, 64-73 (DLKYHDIPNT), threonine 127, arginine 188, glutamine 197, glycine 217, and arginine 218. Lysine 66 acts as the Proton donor in catalysis.

The protein belongs to the OMP decarboxylase family. Type 1 subfamily. In terms of assembly, homodimer.

It carries out the reaction orotidine 5'-phosphate + H(+) = UMP + CO2. It functions in the pathway pyrimidine metabolism; UMP biosynthesis via de novo pathway; UMP from orotate: step 2/2. Functionally, catalyzes the decarboxylation of orotidine 5'-monophosphate (OMP) to uridine 5'-monophosphate (UMP). The chain is Orotidine 5'-phosphate decarboxylase from Geobacter sp. (strain M21).